Reading from the N-terminus, the 280-residue chain is MVVKVGIAKLGNIASGVMAELLLDERADREDMQTFMATSGTKLQPEDIDRVVSTMKAWEPDFCIVVSPNGVLPGPVGARDELLKAGIPCVVITDDITTKKEGWEALKASSFGYIIMKADAMIGARREFLDPVEMADFNGNLVKVLALTGAFRKLQTELDKVIDQVKEGKKGADLVLPKVVMTSDKAVDGEFSNPYALAKARAAYEIAQAVAGVNVKGCFMTKEWEKYIPIVASAHEMMRQAAALGDEAREIEKAGNGIIRKPHKKDGTIVSKITLISKPE.

The protein belongs to the MTD family.

It catalyses the reaction 5,10-methylenetetrahydromethanopterin + oxidized coenzyme F420-(gamma-L-Glu)(n) + 2 H(+) = 5,10-methenyl-5,6,7,8-tetrahydromethanopterin + reduced coenzyme F420-(gamma-L-Glu)(n). The protein operates within one-carbon metabolism; methanogenesis from CO(2); 5,10-methylene-5,6,7,8-tetrahydromethanopterin from 5,10-methenyl-5,6,7,8-tetrahydromethanopterin (coenzyme F420 route): step 1/1. In terms of biological role, catalyzes the reversible reduction of methenyl-H(4)MPT(+) to methylene-H(4)MPT. The chain is F420-dependent methylenetetrahydromethanopterin dehydrogenase from Methanosphaerula palustris (strain ATCC BAA-1556 / DSM 19958 / E1-9c).